The following is a 282-amino-acid chain: 4-hydroxy-3-methylbut-2-enyl diphosphate reductase (282 aa).

C14 is a [4Fe-4S] cluster binding site. Residues H43 and H78 each contribute to the (2E)-4-hydroxy-3-methylbut-2-enyl diphosphate site. Residues H43 and H78 each contribute to the dimethylallyl diphosphate site. Residues H43 and H78 each contribute to the isopentenyl diphosphate site. C100 is a binding site for [4Fe-4S] cluster. H128 lines the (2E)-4-hydroxy-3-methylbut-2-enyl diphosphate pocket. Dimethylallyl diphosphate is bound at residue H128. Isopentenyl diphosphate is bound at residue H128. The active-site Proton donor is E130. T164 serves as a coordination point for (2E)-4-hydroxy-3-methylbut-2-enyl diphosphate. Residue C192 coordinates [4Fe-4S] cluster. (2E)-4-hydroxy-3-methylbut-2-enyl diphosphate-binding residues include S220, S221, N222, and S266. Dimethylallyl diphosphate-binding residues include S220, S221, N222, and S266. S220, S221, N222, and S266 together coordinate isopentenyl diphosphate.

The protein belongs to the IspH family. [4Fe-4S] cluster serves as cofactor.

The catalysed reaction is isopentenyl diphosphate + 2 oxidized [2Fe-2S]-[ferredoxin] + H2O = (2E)-4-hydroxy-3-methylbut-2-enyl diphosphate + 2 reduced [2Fe-2S]-[ferredoxin] + 2 H(+). It catalyses the reaction dimethylallyl diphosphate + 2 oxidized [2Fe-2S]-[ferredoxin] + H2O = (2E)-4-hydroxy-3-methylbut-2-enyl diphosphate + 2 reduced [2Fe-2S]-[ferredoxin] + 2 H(+). It functions in the pathway isoprenoid biosynthesis; dimethylallyl diphosphate biosynthesis; dimethylallyl diphosphate from (2E)-4-hydroxy-3-methylbutenyl diphosphate: step 1/1. Its pathway is isoprenoid biosynthesis; isopentenyl diphosphate biosynthesis via DXP pathway; isopentenyl diphosphate from 1-deoxy-D-xylulose 5-phosphate: step 6/6. Its function is as follows. Catalyzes the conversion of 1-hydroxy-2-methyl-2-(E)-butenyl 4-diphosphate (HMBPP) into a mixture of isopentenyl diphosphate (IPP) and dimethylallyl diphosphate (DMAPP). Acts in the terminal step of the DOXP/MEP pathway for isoprenoid precursor biosynthesis. The protein is 4-hydroxy-3-methylbut-2-enyl diphosphate reductase of Clostridium perfringens (strain SM101 / Type A).